Here is a 524-residue protein sequence, read N- to C-terminus: Citrate exporter 1 (524 aa).

The tract at residues 1-49 (MSSTTSSSRSDLEKVPVPQVTPRDSDSDKGSLSPEPSTLEAQSSEKPPH) is disordered. The segment covering 34–45 (PEPSTLEAQSSE) has biased composition (polar residues). A helical membrane pass occupies residues 60–80 (MVCIVSLAAIFSPLSSNIYFP). An N-linked (GlcNAc...) asparagine glycan is attached at N90. Helical transmembrane passes span 95-115 (LATLTITVYMIVQGLAPSFWG), 125-145 (PVFIGTFIVYLVANIALAESK), 155-175 (ALQAAGSAATISIGAGVIGDI), 186-206 (GIFGGVRMLGQGIGPVFGGIF), and 215-235 (IFWFLTIAGGVSLLSILVLLP). N244 is a glycosylation site (N-linked (GlcNAc...) asparagine). A run of 6 helical transmembrane segments spans residues 296–316 (VFITLFFGSIVYTVWSMVTSS), 332–352 (IGLTFLGNGFGCMSGSYLVGY), 395–415 (TWWVIAIFIVTVALYGVSLRT), 417–437 (LAVPIILQYFIAFCSTGLFTI), 459–479 (LMRCLLGAGGVAIVQPILDAL), and 481–501 (PDYTFLLLAGITLVMTPLLYV).

This sequence belongs to the major facilitator superfamily.

The protein resides in the cell membrane. It carries out the reaction citrate(in) = citrate(out). In terms of biological role, transmembrane transporter that exports citrate across the cell membrane. This chain is Citrate exporter 1, found in Aspergillus niger (strain ATCC 1015 / CBS 113.46 / FGSC A1144 / LSHB Ac4 / NCTC 3858a / NRRL 328 / USDA 3528.7).